We begin with the raw amino-acid sequence, 391 residues long: Succinyl-diaminopimelate desuccinylase (391 aa).

Residue His-78 coordinates Zn(2+). The active site involves Asp-80. Asp-111 provides a ligand contact to Zn(2+). Glu-145 functions as the Proton acceptor in the catalytic mechanism. Zn(2+) is bound by residues Glu-146, Glu-174, and His-360.

This sequence belongs to the peptidase M20A family. DapE subfamily. As to quaternary structure, homodimer. It depends on Zn(2+) as a cofactor. Requires Co(2+) as cofactor.

It carries out the reaction N-succinyl-(2S,6S)-2,6-diaminopimelate + H2O = (2S,6S)-2,6-diaminopimelate + succinate. The protein operates within amino-acid biosynthesis; L-lysine biosynthesis via DAP pathway; LL-2,6-diaminopimelate from (S)-tetrahydrodipicolinate (succinylase route): step 3/3. Catalyzes the hydrolysis of N-succinyl-L,L-diaminopimelic acid (SDAP), forming succinate and LL-2,6-diaminopimelate (DAP), an intermediate involved in the bacterial biosynthesis of lysine and meso-diaminopimelic acid, an essential component of bacterial cell walls. This chain is Succinyl-diaminopimelate desuccinylase, found in Acidovorax ebreus (strain TPSY) (Diaphorobacter sp. (strain TPSY)).